We begin with the raw amino-acid sequence, 185 residues long: Ribosome-recycling factor (185 aa).

Belongs to the RRF family.

It is found in the cytoplasm. Responsible for the release of ribosomes from messenger RNA at the termination of protein biosynthesis. May increase the efficiency of translation by recycling ribosomes from one round of translation to another. This is Ribosome-recycling factor from Shewanella piezotolerans (strain WP3 / JCM 13877).